The primary structure comprises 137 residues: Nucleoside diphosphate kinase (137 aa).

Residues lysine 9, phenylalanine 57, arginine 85, threonine 91, arginine 102, and asparagine 112 each contribute to the ATP site. Histidine 115 (pros-phosphohistidine intermediate) is an active-site residue.

It belongs to the NDK family. In terms of assembly, homotetramer. Requires Mg(2+) as cofactor.

It is found in the cytoplasm. The enzyme catalyses a 2'-deoxyribonucleoside 5'-diphosphate + ATP = a 2'-deoxyribonucleoside 5'-triphosphate + ADP. It carries out the reaction a ribonucleoside 5'-diphosphate + ATP = a ribonucleoside 5'-triphosphate + ADP. In terms of biological role, major role in the synthesis of nucleoside triphosphates other than ATP. The ATP gamma phosphate is transferred to the NDP beta phosphate via a ping-pong mechanism, using a phosphorylated active-site intermediate. In Sulfurimonas denitrificans (strain ATCC 33889 / DSM 1251) (Thiomicrospira denitrificans (strain ATCC 33889 / DSM 1251)), this protein is Nucleoside diphosphate kinase.